The following is a 266-amino-acid chain: 3-methyl-2-oxobutanoate hydroxymethyltransferase (266 aa).

Positions 45 and 84 each coordinate Mg(2+). Residues 45–46 (DS), D84, and K112 contribute to the 3-methyl-2-oxobutanoate site. A Mg(2+)-binding site is contributed by E114. Residue E181 is the Proton acceptor of the active site.

Belongs to the PanB family. In terms of assembly, homodecamer; pentamer of dimers. Mg(2+) serves as cofactor.

The protein resides in the cytoplasm. It catalyses the reaction 3-methyl-2-oxobutanoate + (6R)-5,10-methylene-5,6,7,8-tetrahydrofolate + H2O = 2-dehydropantoate + (6S)-5,6,7,8-tetrahydrofolate. It participates in cofactor biosynthesis; (R)-pantothenate biosynthesis; (R)-pantoate from 3-methyl-2-oxobutanoate: step 1/2. Its function is as follows. Catalyzes the reversible reaction in which hydroxymethyl group from 5,10-methylenetetrahydrofolate is transferred onto alpha-ketoisovalerate to form ketopantoate. The sequence is that of 3-methyl-2-oxobutanoate hydroxymethyltransferase from Pseudomonas savastanoi pv. phaseolicola (strain 1448A / Race 6) (Pseudomonas syringae pv. phaseolicola (strain 1448A / Race 6)).